A 312-amino-acid chain; its full sequence is Light-independent protochlorophyllide reductase iron-sulfur ATP-binding protein (312 aa).

ATP contacts are provided by residues Gly55–Thr60 and Lys84. Ser59 contacts Mg(2+). Residues Cys140 and Cys174 each contribute to the [4Fe-4S] cluster site. Residues Asn225–Arg226 and Pro249–Leu251 each bind ATP.

It belongs to the NifH/BchL/ChlL family. As to quaternary structure, homodimer. Protochlorophyllide reductase is composed of three subunits; BchL, BchN and BchB. The cofactor is [4Fe-4S] cluster.

The catalysed reaction is chlorophyllide a + oxidized 2[4Fe-4S]-[ferredoxin] + 2 ADP + 2 phosphate = protochlorophyllide a + reduced 2[4Fe-4S]-[ferredoxin] + 2 ATP + 2 H2O. Its pathway is porphyrin-containing compound metabolism; bacteriochlorophyll biosynthesis (light-independent). Its function is as follows. Component of the dark-operative protochlorophyllide reductase (DPOR) that uses Mg-ATP and reduced ferredoxin to reduce ring D of protochlorophyllide (Pchlide) to form chlorophyllide a (Chlide). This reaction is light-independent. The L component serves as a unique electron donor to the NB-component of the complex, and binds Mg-ATP. The protein is Light-independent protochlorophyllide reductase iron-sulfur ATP-binding protein of Rhodopseudomonas palustris (strain ATCC BAA-98 / CGA009).